Consider the following 422-residue polypeptide: Probable metallocarboxypeptidase A (422 aa).

A signal peptide spans 1 to 17 (MRSVLSLALLAANVVTA). A propeptide spans 18-112 (AVVAPFDYSG…FEAYSAGYAP (95 aa)) (activation peptide). The region spanning 119-419 (SYHSYQDHLS…AGTVAMLKAV (301 aa)) is the Peptidase M14 domain. 2 residues coordinate Zn(2+): His179 and Glu182. Residues 179–182 (HARE), Arg237, and 254–255 (NR) each bind substrate. A disulfide bridge connects residues Cys248 and Cys271. His309 contributes to the Zn(2+) binding site. 310–311 (SY) lines the substrate pocket. The Proton donor/acceptor role is filled by Glu385.

Belongs to the peptidase M14 family. Requires Zn(2+) as cofactor.

The protein localises to the secreted. In terms of biological role, extracellular metalloprotease that contributes to pathogenicity. In Arthroderma benhamiae (strain ATCC MYA-4681 / CBS 112371) (Trichophyton mentagrophytes), this protein is Probable metallocarboxypeptidase A (MCPA).